A 170-amino-acid polypeptide reads, in one-letter code: Co-chaperone protein HscB homolog (170 aa).

The region spanning 5-79 is the J domain; it reads DHFSLFGLPA…RARYLCEQAG (75 aa).

The protein belongs to the HscB family. Interacts with HscA and stimulates its ATPase activity.

Functionally, co-chaperone involved in the maturation of iron-sulfur cluster-containing proteins. Seems to help targeting proteins to be folded toward HscA. The polypeptide is Co-chaperone protein HscB homolog (Bordetella parapertussis (strain 12822 / ATCC BAA-587 / NCTC 13253)).